The primary structure comprises 840 residues: Microcephalin (840 aa).

In terms of domain architecture, BRCT 1 spans 1 to 93 (MAAHILKDVV…AHIDESLFPA (93 aa)). The tract at residues 184–206 (KEKRENLSPSSSQMIQQSHDNPS) is disordered. A compositionally biased stretch (polar residues) spans 190–206 (LSPSSSQMIQQSHDNPS). Phosphoserine occurs at positions 279, 287, 296, and 333. Disordered stretches follow at residues 313–379 (PDQK…SIRR) and 418–437 (PDNL…QLPS). At Thr335 the chain carries Phosphothreonine. Positions 355–378 (KRQRVSHGSHSPSKGKSKRKRSIR) are enriched in basic residues. Positions 427 to 437 (ENLPPTSQLPS) are enriched in polar residues. The residue at position 552 (Ser552) is a Phosphoserine. Residues 562 to 586 (LKSTQNKGTTSKISNSSEGEAQSEH) are disordered. The segment covering 563-581 (KSTQNKGTTSKISNSSEGE) has biased composition (polar residues). BRCT domains follow at residues 644–734 (SGRG…PFEL) and 755–837 (YRGT…NYLL).

As to quaternary structure, interacts with CDC27 and maybe other components of the APC/C complex. Interacts with histone variant H2AX under DNA damage conditions.

It is found in the cytoplasm. It localises to the cytoskeleton. Its subcellular location is the microtubule organizing center. The protein localises to the centrosome. In terms of biological role, implicated in chromosome condensation and DNA damage induced cellular responses. May play a role in neurogenesis and regulation of the size of the cerebral cortex. The protein is Microcephalin of Hylobates lar (Lar gibbon).